The following is a 260-amino-acid chain: Acetylglutamate kinase (260 aa).

Substrate is bound by residues 46–47, R68, and N160; that span reads GG.

It belongs to the acetylglutamate kinase family. ArgB subfamily.

It is found in the cytoplasm. The enzyme catalyses N-acetyl-L-glutamate + ATP = N-acetyl-L-glutamyl 5-phosphate + ADP. Its pathway is amino-acid biosynthesis; L-arginine biosynthesis; N(2)-acetyl-L-ornithine from L-glutamate: step 2/4. In terms of biological role, catalyzes the ATP-dependent phosphorylation of N-acetyl-L-glutamate. This Shewanella oneidensis (strain ATCC 700550 / JCM 31522 / CIP 106686 / LMG 19005 / NCIMB 14063 / MR-1) protein is Acetylglutamate kinase.